We begin with the raw amino-acid sequence, 518 residues long: Retinal dehydrogenase 2 (518 aa).

At Tyr168 the chain carries Phosphotyrosine. NAD(+)-binding positions include Ile184–Trp186, Lys210–Glu213, and Ser264–Glu266. The Proton acceptor role is filled by Glu286. The active-site Nucleophile is the Cys320. Ser351 carries the post-translational modification Phosphoserine. NAD(+) contacts are provided by residues Lys366–Lys370 and Glu417.

It belongs to the aldehyde dehydrogenase family. Homotetramer.

It localises to the cytoplasm. The enzyme catalyses retinal + NAD(+) + H2O = retinoate + NADH + 2 H(+). The catalysed reaction is all-trans-retinal + NAD(+) + H2O = all-trans-retinoate + NADH + 2 H(+). It carries out the reaction all-trans-13,14-dihydroretinal + NAD(+) + H2O = all-trans-13,14-dihydroretinoate + NADH + 2 H(+). The protein operates within cofactor metabolism; retinol metabolism. Its function is as follows. Catalyzes the NAD-dependent oxidation of aldehyde substrates, such as all-trans-retinal and all-trans-13,14-dihydroretinal, to their corresponding carboxylic acids, all-trans-retinoate and all-trans-13,14-dihydroretinoate, respectively. Retinoate signaling is critical for the transcriptional control of many genes, for instance it is crucial for initiation of meiosis in both male and female. Recognizes retinal as substrate, both in its free form and when bound to cellular retinol-binding protein. Lacks activity with benzaldehyde, acetaldehyde and octanal. Displays complete lack of activity with citral. The sequence is that of Retinal dehydrogenase 2 (Aldh1a2) from Mus musculus (Mouse).